We begin with the raw amino-acid sequence, 597 residues long: Elongation factor 4 (597 aa).

The tr-type G domain maps to 2-184; the sequence is KNIRNFSIIA…EVVNKIPPPK (183 aa). GTP is bound by residues 14–19 and 131–134; these read DHGKST and NKID.

This sequence belongs to the TRAFAC class translation factor GTPase superfamily. Classic translation factor GTPase family. LepA subfamily.

It localises to the cell inner membrane. It catalyses the reaction GTP + H2O = GDP + phosphate + H(+). Its function is as follows. Required for accurate and efficient protein synthesis under certain stress conditions. May act as a fidelity factor of the translation reaction, by catalyzing a one-codon backward translocation of tRNAs on improperly translocated ribosomes. Back-translocation proceeds from a post-translocation (POST) complex to a pre-translocation (PRE) complex, thus giving elongation factor G a second chance to translocate the tRNAs correctly. Binds to ribosomes in a GTP-dependent manner. This chain is Elongation factor 4, found in Chromobacterium violaceum (strain ATCC 12472 / DSM 30191 / JCM 1249 / CCUG 213 / NBRC 12614 / NCIMB 9131 / NCTC 9757 / MK).